A 295-amino-acid chain; its full sequence is Aspartate carbamoyltransferase catalytic subunit (295 aa).

2 residues coordinate carbamoyl phosphate: Arg-49 and Thr-50. Residue Lys-77 participates in L-aspartate binding. Arg-99, His-127, and Gln-130 together coordinate carbamoyl phosphate. L-aspartate contacts are provided by Arg-161 and Arg-212. Residues Gly-251 and Pro-252 each coordinate carbamoyl phosphate.

This sequence belongs to the aspartate/ornithine carbamoyltransferase superfamily. ATCase family. As to quaternary structure, heterododecamer (2C3:3R2) of six catalytic PyrB chains organized as two trimers (C3), and six regulatory PyrI chains organized as three dimers (R2).

It catalyses the reaction carbamoyl phosphate + L-aspartate = N-carbamoyl-L-aspartate + phosphate + H(+). The protein operates within pyrimidine metabolism; UMP biosynthesis via de novo pathway; (S)-dihydroorotate from bicarbonate: step 2/3. Functionally, catalyzes the condensation of carbamoyl phosphate and aspartate to form carbamoyl aspartate and inorganic phosphate, the committed step in the de novo pyrimidine nucleotide biosynthesis pathway. The protein is Aspartate carbamoyltransferase catalytic subunit of Campylobacter jejuni (strain RM1221).